The sequence spans 507 residues: ATP synthase subunit alpha (507 aa).

170 to 177 is a binding site for ATP; sequence GDRQTGKT.

It belongs to the ATPase alpha/beta chains family. In terms of assembly, F-type ATPases have 2 components, CF(1) - the catalytic core - and CF(0) - the membrane proton channel. CF(1) has five subunits: alpha(3), beta(3), gamma(1), delta(1), epsilon(1). CF(0) has three main subunits: a(1), b(2) and c(9-12). The alpha and beta chains form an alternating ring which encloses part of the gamma chain. CF(1) is attached to CF(0) by a central stalk formed by the gamma and epsilon chains, while a peripheral stalk is formed by the delta and b chains.

It localises to the cell inner membrane. It carries out the reaction ATP + H2O + 4 H(+)(in) = ADP + phosphate + 5 H(+)(out). Functionally, produces ATP from ADP in the presence of a proton gradient across the membrane. The alpha chain is a regulatory subunit. In Thermosipho africanus (strain TCF52B), this protein is ATP synthase subunit alpha.